The chain runs to 556 residues: Melanoma-associated antigen B4 (556 aa).

The span at 1–15 (MPRGQKSKARAREKR) shows a compositional bias: basic residues. The segment at 1 to 110 (MPRGQKSKAR…RFSENPQNDL (110 aa)) is disordered. The span at 39–73 (PSCSNQDSGDAVASTSTAGFPQKSKSQGEAPTTTA) shows a compositional bias: polar residues. Residues 77-87 (GACRRSRKSTR) show a composition bias toward basic residues. One can recognise an MAGE domain in the interval 111–310 (LTRKTGMLMQ…QAFPTHYEEA (200 aa)). Positions 315 to 335 (EERAQAEAVGSPGTSAKDKAE) are disordered. S325 is modified (phosphoserine). Repeat copies occupy residues 334–348 (AEAKVTLVDSSCKYQ), 349–363 (AESKVTLVDSSCKDQ), 364–378 (AESKVTLVDPSCKDN), 379–392 (AKSKVTLGSSRKYK), 393–407 (AKSKVPLVDSSCKDQ), 408–421 (AESKVTLVDSCKDQ), 422–436 (AESKVTLVDSSCKDQ), 437–451 (AESKVTLVDSSCKDQ), 452–466 (AESKVTLVDPSCKDK), 467–480 (AKSKVTLGSSHKYK), 481–495 (AKSKVTLVDSSCKDQ), 496–510 (AESKVTLVDSSCKDQ), 511–525 (AESKVTLVDPSCKDN), 526–539 (AKSKVTLGSSRKYK), and 540–554 (AKSKVPLVDSSGKDK). The interval 334–554 (AEAKVTLVDS…PLVDSSGKDK (221 aa)) is 15 X 15 AA approximate tandem repeats.

In terms of tissue distribution, expressed in testis (at protein level).

It is found in the cytoplasm. In Mus musculus (Mouse), this protein is Melanoma-associated antigen B4.